The primary structure comprises 216 residues: Adenylate kinase (216 aa).

Position 10–15 (10–15 (GAGKGT)) interacts with ATP. The tract at residues 30–59 (STGDMFRAAMKAETELGLQAKSFIDKGALV) is NMP. Residues threonine 31, arginine 36, 57-59 (ALV), 85-88 (GFPR), and glutamine 92 contribute to the AMP site. The interval 126–163 (GRRICKECGATYHLEFNPPAKADVCDKCGGELYQRSDD) is LID. Arginine 127 contributes to the ATP binding site. Zn(2+) is bound by residues cysteine 130 and cysteine 133. 136–137 (TY) is an ATP binding site. Cysteine 150 and cysteine 153 together coordinate Zn(2+). AMP contacts are provided by arginine 160 and arginine 171. Residue glutamine 199 coordinates ATP.

The protein belongs to the adenylate kinase family. Monomer.

Its subcellular location is the cytoplasm. It catalyses the reaction AMP + ATP = 2 ADP. It functions in the pathway purine metabolism; AMP biosynthesis via salvage pathway; AMP from ADP: step 1/1. Functionally, catalyzes the reversible transfer of the terminal phosphate group between ATP and AMP. Plays an important role in cellular energy homeostasis and in adenine nucleotide metabolism. The polypeptide is Adenylate kinase (Bacillus cytotoxicus (strain DSM 22905 / CIP 110041 / 391-98 / NVH 391-98)).